The chain runs to 464 residues: ATP synthase subunit beta (464 aa).

153 to 160 (GGAGVGKT) serves as a coordination point for ATP.

This sequence belongs to the ATPase alpha/beta chains family. In terms of assembly, F-type ATPases have 2 components, CF(1) - the catalytic core - and CF(0) - the membrane proton channel. CF(1) has five subunits: alpha(3), beta(3), gamma(1), delta(1), epsilon(1). CF(0) has three main subunits: a(1), b(2) and c(9-12). The alpha and beta chains form an alternating ring which encloses part of the gamma chain. CF(1) is attached to CF(0) by a central stalk formed by the gamma and epsilon chains, while a peripheral stalk is formed by the delta and b chains.

The protein resides in the cell membrane. The catalysed reaction is ATP + H2O + 4 H(+)(in) = ADP + phosphate + 5 H(+)(out). Its function is as follows. Produces ATP from ADP in the presence of a proton gradient across the membrane. The catalytic sites are hosted primarily by the beta subunits. This Alkaliphilus metalliredigens (strain QYMF) protein is ATP synthase subunit beta.